Here is a 225-residue protein sequence, read N- to C-terminus: MAFTSAVITFPGSNCDRDMAVAIEQVCGGTVHRVWHGDADLPEGLDFIALPGGFSYGDYLRSGAMAARSPVMQAVVRAAERGVTVLGVCNGFQVLTEAGLLPGALMRNAGIRFVCRDVKLTVENNQSLFTAGYDAGQQITIPVAHHDGNYFADDATLDRIEGEGRVAFRYAEEVNGSARNIAGVLNDRGNVLGMMPHPERMIEAAHGGSDGRALFESVVRGLVEA.

One can recognise a Glutamine amidotransferase type-1 domain in the interval 5 to 225; that stretch reads SAVITFPGSN…ESVVRGLVEA (221 aa). Cys-89 serves as the catalytic Nucleophile. Active-site residues include His-197 and Glu-199.

As to quaternary structure, part of the FGAM synthase complex composed of 1 PurL, 1 PurQ and 2 PurS subunits.

It is found in the cytoplasm. It catalyses the reaction N(2)-formyl-N(1)-(5-phospho-beta-D-ribosyl)glycinamide + L-glutamine + ATP + H2O = 2-formamido-N(1)-(5-O-phospho-beta-D-ribosyl)acetamidine + L-glutamate + ADP + phosphate + H(+). The catalysed reaction is L-glutamine + H2O = L-glutamate + NH4(+). It functions in the pathway purine metabolism; IMP biosynthesis via de novo pathway; 5-amino-1-(5-phospho-D-ribosyl)imidazole from N(2)-formyl-N(1)-(5-phospho-D-ribosyl)glycinamide: step 1/2. Part of the phosphoribosylformylglycinamidine synthase complex involved in the purines biosynthetic pathway. Catalyzes the ATP-dependent conversion of formylglycinamide ribonucleotide (FGAR) and glutamine to yield formylglycinamidine ribonucleotide (FGAM) and glutamate. The FGAM synthase complex is composed of three subunits. PurQ produces an ammonia molecule by converting glutamine to glutamate. PurL transfers the ammonia molecule to FGAR to form FGAM in an ATP-dependent manner. PurS interacts with PurQ and PurL and is thought to assist in the transfer of the ammonia molecule from PurQ to PurL. This is Phosphoribosylformylglycinamidine synthase subunit PurQ from Novosphingobium aromaticivorans (strain ATCC 700278 / DSM 12444 / CCUG 56034 / CIP 105152 / NBRC 16084 / F199).